We begin with the raw amino-acid sequence, 657 residues long: tRNA 5-methylaminomethyl-2-thiouridine biosynthesis bifunctional protein MnmC (657 aa).

The tRNA (mnm(5)s(2)U34)-methyltransferase stretch occupies residues 1-236 (MPDRLVPATL…KRAMLVGEYA (236 aa)). The tract at residues 261–657 (IGAGVAGCAV…LRARQVSAAD (397 aa)) is FAD-dependent cmnm(5)s(2)U34 oxidoreductase.

The protein in the N-terminal section; belongs to the methyltransferase superfamily. tRNA (mnm(5)s(2)U34)-methyltransferase family. It in the C-terminal section; belongs to the DAO family. The cofactor is FAD.

It localises to the cytoplasm. It catalyses the reaction 5-aminomethyl-2-thiouridine(34) in tRNA + S-adenosyl-L-methionine = 5-methylaminomethyl-2-thiouridine(34) in tRNA + S-adenosyl-L-homocysteine + H(+). In terms of biological role, catalyzes the last two steps in the biosynthesis of 5-methylaminomethyl-2-thiouridine (mnm(5)s(2)U) at the wobble position (U34) in tRNA. Catalyzes the FAD-dependent demodification of cmnm(5)s(2)U34 to nm(5)s(2)U34, followed by the transfer of a methyl group from S-adenosyl-L-methionine to nm(5)s(2)U34, to form mnm(5)s(2)U34. The protein is tRNA 5-methylaminomethyl-2-thiouridine biosynthesis bifunctional protein MnmC of Burkholderia multivorans (strain ATCC 17616 / 249).